Here is a 471-residue protein sequence, read N- to C-terminus: Reticulon-2 (471 aa).

Disordered regions lie at residues 1–137 (MGQV…ERPL), 153–181 (SAGS…ASEA), and 205–234 (QLSP…DDEP). Over residues 14–25 (APSTASSTPDST) the composition is skewed to low complexity. The span at 32–43 (SDFRELHTAREF) shows a compositional bias: basic and acidic residues. At Ser-44 the chain carries Phosphoserine. Composition is skewed to polar residues over residues 100 to 118 (PQQS…LSQS) and 159 to 168 (DSATSSSTPL). Acidic residues predominate over residues 169–181 (ENEEPDGLEASEA). Residues 205 to 229 (QLSPSSGTPQAHTPSPQRSQDSNSG) are compositionally biased toward polar residues. 2 positions are modified to phosphoserine: Ser-226 and Ser-228. One can recognise a Reticulon domain in the interval 272–471 (VADLLYWKDT…SVSGSKAKAE (200 aa)). 2 consecutive transmembrane segments (helical) span residues 295 to 315 (LLCL…LLGL) and 390 to 410 (LLFY…LVIL).

As to quaternary structure, interacts with SPAST. Interacts with BACE1. Interacts (via first transmembrane domain) with ARL6IP5/GTRAP3-18. Interacts (via N-terminus) with SLC1A1/EAAC1; the interaction promotes cell surface expression of SLC1A1. In terms of tissue distribution, detected in skeletal and cardiac muscle (at protein level). Expressed predominantly in neural and muscular tissues.

It is found in the endoplasmic reticulum membrane. It localises to the sarcoplasmic reticulum membrane. The protein localises to the cell membrane. The protein resides in the sarcolemma. Its subcellular location is the T-tubule. It is found in the cytoplasm. It localises to the myofibril. The protein localises to the sarcomere. The protein resides in the z line. Its subcellular location is the cytoskeleton. Inhibits amyloid precursor protein processing, probably by blocking BACE1 activity. Enhances trafficking of the glutamate transporter SLC1A1/EAAC1 from the endoplasmic reticulum to the cell surface. Plays a role in the translocation of SLC2A4/GLUT4 from intracellular membranes to the cell membrane which facilitates the uptake of glucose into the cell. The chain is Reticulon-2 from Mus musculus (Mouse).